Consider the following 149-residue polypeptide: SsrA-binding protein (149 aa).

The interval 123 to 149 (KQFDKRETEKQRDWQREKARIMKGGKE) is disordered.

The protein belongs to the SmpB family.

Its subcellular location is the cytoplasm. In terms of biological role, required for rescue of stalled ribosomes mediated by trans-translation. Binds to transfer-messenger RNA (tmRNA), required for stable association of tmRNA with ribosomes. tmRNA and SmpB together mimic tRNA shape, replacing the anticodon stem-loop with SmpB. tmRNA is encoded by the ssrA gene; the 2 termini fold to resemble tRNA(Ala) and it encodes a 'tag peptide', a short internal open reading frame. During trans-translation Ala-aminoacylated tmRNA acts like a tRNA, entering the A-site of stalled ribosomes, displacing the stalled mRNA. The ribosome then switches to translate the ORF on the tmRNA; the nascent peptide is terminated with the 'tag peptide' encoded by the tmRNA and targeted for degradation. The ribosome is freed to recommence translation, which seems to be the essential function of trans-translation. This Cupriavidus taiwanensis (strain DSM 17343 / BCRC 17206 / CCUG 44338 / CIP 107171 / LMG 19424 / R1) (Ralstonia taiwanensis (strain LMG 19424)) protein is SsrA-binding protein.